Consider the following 67-residue polypeptide: ATP synthase F(0) complex subunit 8 (67 aa).

Residues 8–24 (TWFINIVSMILTLFIVF) form a helical membrane-spanning segment. The residue at position 54 (Lys54) is an N6-acetyllysine; alternate. Residue Lys54 is modified to N6-succinyllysine; alternate. Lys57 is modified (N6-acetyllysine).

Belongs to the ATPase protein 8 family. Component of the ATP synthase complex composed at least of ATP5F1A/subunit alpha, ATP5F1B/subunit beta, ATP5MC1/subunit c (homooctomer), MT-ATP6/subunit a, MT-ATP8/subunit 8, ATP5ME/subunit e, ATP5MF/subunit f, ATP5MG/subunit g, ATP5MK/subunit k, ATP5MJ/subunit j, ATP5F1C/subunit gamma, ATP5F1D/subunit delta, ATP5F1E/subunit epsilon, ATP5PF/subunit F6, ATP5PB/subunit b, ATP5PD/subunit d, ATP5PO/subunit OSCP. ATP synthase complex consists of a soluble F(1) head domain (subunits alpha(3) and beta(3)) - the catalytic core - and a membrane F(0) domain - the membrane proton channel (subunits c, a, 8, e, f, g, k and j). These two domains are linked by a central stalk (subunits gamma, delta, and epsilon) rotating inside the F1 region and a stationary peripheral stalk (subunits F6, b, d, and OSCP). Interacts with PRICKLE3.

Its subcellular location is the mitochondrion membrane. Its function is as follows. Subunit 8, of the mitochondrial membrane ATP synthase complex (F(1)F(0) ATP synthase or Complex V) that produces ATP from ADP in the presence of a proton gradient across the membrane which is generated by electron transport complexes of the respiratory chain. ATP synthase complex consist of a soluble F(1) head domain - the catalytic core - and a membrane F(1) domain - the membrane proton channel. These two domains are linked by a central stalk rotating inside the F(1) region and a stationary peripheral stalk. During catalysis, ATP synthesis in the catalytic domain of F(1) is coupled via a rotary mechanism of the central stalk subunits to proton translocation. In vivo, can only synthesize ATP although its ATP hydrolase activity can be activated artificially in vitro. Part of the complex F(0) domain. In Equus caballus (Horse), this protein is ATP synthase F(0) complex subunit 8.